Here is an 887-residue protein sequence, read N- to C-terminus: DNA mismatch repair protein MutS (887 aa).

Gly-621–Ser-628 provides a ligand contact to ATP. The tract at residues Ala-828–Ser-853 is disordered. Residues Lys-834 to Pro-848 are compositionally biased toward low complexity.

Belongs to the DNA mismatch repair MutS family.

This protein is involved in the repair of mismatches in DNA. It is possible that it carries out the mismatch recognition step. This protein has a weak ATPase activity. The sequence is that of DNA mismatch repair protein MutS from Saccharophagus degradans (strain 2-40 / ATCC 43961 / DSM 17024).